The following is a 355-amino-acid chain: Probable F-box protein At5g36000 (355 aa).

The span at methionine 1–glycine 14 shows a compositional bias: basic and acidic residues. The disordered stretch occupies residues methionine 1–glycine 44. Residues glutamine 78–alanine 124 enclose the F-box; degenerate domain.

This Arabidopsis thaliana (Mouse-ear cress) protein is Probable F-box protein At5g36000.